Consider the following 345-residue polypeptide: UDP-3-O-acylglucosamine N-acyltransferase 3 (345 aa).

Catalysis depends on His236, which acts as the Proton acceptor.

It belongs to the transferase hexapeptide repeat family. LpxD subfamily. In terms of assembly, homotrimer.

The catalysed reaction is a UDP-3-O-[(3R)-3-hydroxyacyl]-alpha-D-glucosamine + a (3R)-hydroxyacyl-[ACP] = a UDP-2-N,3-O-bis[(3R)-3-hydroxyacyl]-alpha-D-glucosamine + holo-[ACP] + H(+). It participates in bacterial outer membrane biogenesis; LPS lipid A biosynthesis. In terms of biological role, catalyzes the N-acylation of UDP-3-O-acylglucosamine using 3-hydroxyacyl-ACP as the acyl donor. Is involved in the biosynthesis of lipid A, a phosphorylated glycolipid that anchors the lipopolysaccharide to the outer membrane of the cell. In Gloeobacter violaceus (strain ATCC 29082 / PCC 7421), this protein is UDP-3-O-acylglucosamine N-acyltransferase 3.